Reading from the N-terminus, the 405-residue chain is MADVNKVVLAYSGGLDTSVILKWLQDTYNCEVVTFTADLGQGEEVEPARAKAQAMGVKEIYIDDLREEFVRDFVFPMFRANTVYEGEYLLGTSIARPLIAKRLIEIANETGADAISHGATGKGNDQVRFELGAYALKPGVKVIAPWREWDLLSREKLMDYAEKHGIPIERHGKKKSPYSMDANLLHISYEGGVLEDTWTEHEEDMWRWTVSPEKAPDTPQYLELTYRNGDIVALDGVEMTPATVLATLNRIGGEHGIGRLDIVENRYVGMKSRGCYETPGGTIMLRAHRAIESITLDREVAHLKDELMPKYASLIYTGYWWSPERLMLQQMIDASQAHVNGVVRLKLYKGNVIVTGRKSDESLFDANIATFEEDGGAYNQADAAGFIKLNALRMRIAANKGRTLV.

ATP-binding positions include 10-18 and Ala37; that span reads AYSGGLDTS. The L-citrulline site is built by Tyr88 and Ser93. Gly118 contributes to the ATP binding site. L-aspartate is bound by residues Thr120, Asn124, and Asp125. Asn124 lines the L-citrulline pocket. Residues Arg128, Ser179, Ser188, Glu264, and Tyr276 each coordinate L-citrulline.

The protein belongs to the argininosuccinate synthase family. Type 1 subfamily. In terms of assembly, homotetramer.

The protein resides in the cytoplasm. The enzyme catalyses L-citrulline + L-aspartate + ATP = 2-(N(omega)-L-arginino)succinate + AMP + diphosphate + H(+). It functions in the pathway amino-acid biosynthesis; L-arginine biosynthesis; L-arginine from L-ornithine and carbamoyl phosphate: step 2/3. The protein is Argininosuccinate synthase of Pseudomonas fluorescens (strain ATCC BAA-477 / NRRL B-23932 / Pf-5).